The following is a 159-amino-acid chain: 3-hydroxyacyl-[acyl-carrier-protein] dehydratase FabZ (159 aa).

Residue His58 is part of the active site.

This sequence belongs to the thioester dehydratase family. FabZ subfamily.

The protein resides in the cytoplasm. The catalysed reaction is a (3R)-hydroxyacyl-[ACP] = a (2E)-enoyl-[ACP] + H2O. In terms of biological role, involved in unsaturated fatty acids biosynthesis. Catalyzes the dehydration of short chain beta-hydroxyacyl-ACPs and long chain saturated and unsaturated beta-hydroxyacyl-ACPs. The protein is 3-hydroxyacyl-[acyl-carrier-protein] dehydratase FabZ of Helicobacter pylori (strain HPAG1).